The following is a 192-amino-acid chain: Ribosomal RNA small subunit methyltransferase G (192 aa).

Residues Gly63, Phe68, 112–113, and Arg125 each bind S-adenosyl-L-methionine; that span reads IE.

It belongs to the methyltransferase superfamily. RNA methyltransferase RsmG family.

Its subcellular location is the cytoplasm. It carries out the reaction guanosine(527) in 16S rRNA + S-adenosyl-L-methionine = N(7)-methylguanosine(527) in 16S rRNA + S-adenosyl-L-homocysteine. Functionally, specifically methylates the N7 position of guanine in position 527 of 16S rRNA. This is Ribosomal RNA small subunit methyltransferase G from Rickettsia bellii (strain OSU 85-389).